The primary structure comprises 276 residues: 2-dehydro-3-deoxyphosphooctonate aldolase (276 aa).

This sequence belongs to the KdsA family.

The protein resides in the cytoplasm. The enzyme catalyses D-arabinose 5-phosphate + phosphoenolpyruvate + H2O = 3-deoxy-alpha-D-manno-2-octulosonate-8-phosphate + phosphate. It participates in carbohydrate biosynthesis; 3-deoxy-D-manno-octulosonate biosynthesis; 3-deoxy-D-manno-octulosonate from D-ribulose 5-phosphate: step 2/3. It functions in the pathway bacterial outer membrane biogenesis; lipopolysaccharide biosynthesis. This is 2-dehydro-3-deoxyphosphooctonate aldolase from Xanthomonas campestris pv. campestris (strain 8004).